The sequence spans 578 residues: Probable lysosomal cobalamin transporter (578 aa).

Helical transmembrane passes span 8-28 and 46-66; these read LIWV…SVFI and IFAI…VALV. An N-linked (GlcNAc...) asparagine glycan is attached at N70. The next 2 helical transmembrane spans lie at 95-115 and 145-165; these read VVYY…IPFT and TITF…VPVA. N168 carries an N-linked (GlcNAc...) asparagine glycan. The next 6 membrane-spanning stretches (helical) occupy residues 188–208, 312–332, 347–367, 375–395, 419–439, and 506–526; these read ALTF…VLYT, LLGG…MLLT, GYIL…VQAA, VIFT…IAIV, LTTA…SMVV, and FFGV…LIVV. The segment at 539 to 578 is disordered; that stretch reads RQMDEDAEEAEEEGLLASTGRRLDTAWQDITGRSNRQRDS. The span at 540-552 shows a compositional bias: acidic residues; the sequence is QMDEDAEEAEEEG.

It belongs to the LIMR family. LMBRD1 subfamily.

The protein localises to the lysosome membrane. In terms of biological role, probable lysosomal cobalamin transporter. Required to export cobalamin from lysosomes allowing its conversion to cofactors. The chain is Probable lysosomal cobalamin transporter from Aspergillus terreus (strain NIH 2624 / FGSC A1156).